Here is a 326-residue protein sequence, read N- to C-terminus: Phospho-N-acetylmuramoyl-pentapeptide-transferase (326 aa).

The next 10 membrane-spanning stretches (helical) occupy residues 2-22, 51-71, 73-93, 113-133, 143-163, 175-195, 199-219, 225-245, 250-270, and 305-325; these read ILAT…FPYF, VPPM…LLWA, LTPE…LGFI, ILIQ…YSAE, GVII…IVGS, GLAA…AYIT, MNIT…LWFN, IFMG…TSVL, MLFA…IIQI, and VIVM…ITFL.

This sequence belongs to the glycosyltransferase 4 family. MraY subfamily. Requires Mg(2+) as cofactor.

Its subcellular location is the cell membrane. It carries out the reaction UDP-N-acetyl-alpha-D-muramoyl-L-alanyl-gamma-D-glutamyl-meso-2,6-diaminopimeloyl-D-alanyl-D-alanine + di-trans,octa-cis-undecaprenyl phosphate = di-trans,octa-cis-undecaprenyl diphospho-N-acetyl-alpha-D-muramoyl-L-alanyl-D-glutamyl-meso-2,6-diaminopimeloyl-D-alanyl-D-alanine + UMP. Its pathway is cell wall biogenesis; peptidoglycan biosynthesis. In terms of biological role, catalyzes the initial step of the lipid cycle reactions in the biosynthesis of the cell wall peptidoglycan: transfers peptidoglycan precursor phospho-MurNAc-pentapeptide from UDP-MurNAc-pentapeptide onto the lipid carrier undecaprenyl phosphate, yielding undecaprenyl-pyrophosphoryl-MurNAc-pentapeptide, known as lipid I. This Wolbachia pipientis wMel protein is Phospho-N-acetylmuramoyl-pentapeptide-transferase.